The chain runs to 51 residues: Kunitz-like toxin PcKuz1 (51 aa).

3 disulfide bridges follow: C1–C51, C10–C34, and C26–C47.

The protein belongs to the venom Kunitz-type family. Sea anemone type 2 potassium channel toxin subfamily.

It is found in the secreted. Its subcellular location is the nematocyst. Weak serine protease inhibitor that has been tested on both trypsin and elastase. May also act as a neurotoxin by inhibiting voltage-gated potassium channels (Kv). In vivo, is lethal to zebrafish larvae. This chain is Kunitz-like toxin PcKuz1, found in Palythoa caribaeorum (White encrusting zoanthid coral).